Reading from the N-terminus, the 441-residue chain is Xylose isomerase (441 aa).

Active-site residues include histidine 100 and aspartate 103. The Mg(2+) site is built by glutamate 231, glutamate 267, histidine 270, aspartate 295, aspartate 306, aspartate 308, and aspartate 338.

This sequence belongs to the xylose isomerase family. Homotetramer. Mg(2+) is required as a cofactor.

Its subcellular location is the cytoplasm. It carries out the reaction alpha-D-xylose = alpha-D-xylulofuranose. This is Xylose isomerase from Paraburkholderia phymatum (strain DSM 17167 / CIP 108236 / LMG 21445 / STM815) (Burkholderia phymatum).